The following is a 670-amino-acid chain: WD repeat-containing protein 48 homolog (670 aa).

WD repeat units follow at residues 13-52 (RHRN…SQEP), 59-98 (HHND…CMST), 101-140 (THRD…ALTA), 152-191 (GSKD…KIAK), 194-233 (GHTE…CIQT), 236-275 (VHSE…NSVL), and 278-317 (EERA…KLSN). The interval 321 to 348 (SSNSSINSGGGGDGTPVTNSASNATPAS) is disordered. Residues 338–348 (TNSASNATPAS) show a composition bias toward low complexity. One copy of the WD 8 repeat lies at 359 to 398 (KGGAAIKKYHVLNDKRFMLTKDSEQNVAIYDVLKVKKVED). Residues 613–625 (GGGGGSSTGGGGN) show a composition bias toward gly residues. A disordered region spans residues 613-645 (GGGGGSSTGGGGNSNSSQNNSQSDANSEGSQVP). Positions 626 to 635 (SNSSQNNSQS) are enriched in low complexity.

It belongs to the WD repeat WDR48 family. In terms of assembly, catalytic component of the Usp12-46 deubiquitylase complex consisting of Usp12-46, Wdr20 and Uaf1; regulatory subunit that, together wtih Wdr20, stabilizes Usp12-46. The Usp12-46 deubiquitylase complex associates with arr/arrow; the interaction leads to deubiquitination and stabilization of arr/arrow.

Its function is as follows. Regulatory component of the Usp12-46 deubiquitylase complex. activates deubiquitination by increasing the catalytic turnover without increasing the affinity of deubiquitinating enzymes for the substrate. The complex deubiquitylates the wg/wingless-signaling receptor arr/arrow, which stabilizes the receptor and increases its concentration at the cell surface; this enhances the sensitivity of cells to wg/wingless-signal stimulation. This increases the amplitude and spatial range of the signaling response to the wg/wingless morphogen gradient, facilitating the precise concentration-dependent regulation of its target genes. Together with Wdr20 and Usp12-46 required for wg/wingless-mediated signaling in the wing imaginal disc and for wg/wingless-dependent regulation of intestinal stem cell proliferation. The polypeptide is WD repeat-containing protein 48 homolog (Culex quinquefasciatus (Southern house mosquito)).